A 275-amino-acid chain; its full sequence is Bis(5'-nucleosyl)-tetraphosphatase, symmetrical (275 aa).

Belongs to the Ap4A hydrolase family.

It catalyses the reaction P(1),P(4)-bis(5'-adenosyl) tetraphosphate + H2O = 2 ADP + 2 H(+). Its function is as follows. Hydrolyzes diadenosine 5',5'''-P1,P4-tetraphosphate to yield ADP. In Haemophilus influenzae (strain PittEE), this protein is Bis(5'-nucleosyl)-tetraphosphatase, symmetrical.